A 191-amino-acid chain; its full sequence is Putative glutathione-dependent formaldehyde-activating enzyme (191 aa).

The CENP-V/GFA domain occupies 20–166; the sequence is FPGGNLYCLC…FQSLGLQTYD (147 aa). Positions 27, 29, 48, 50, 53, 95, and 98 each coordinate Zn(2+).

This sequence belongs to the Gfa family. Requires Zn(2+) as cofactor.

It catalyses the reaction S-(hydroxymethyl)glutathione = glutathione + formaldehyde. Its pathway is one-carbon metabolism; formaldehyde degradation; formate from formaldehyde (glutathione route): step 1/3. In terms of biological role, catalyzes the condensation of formaldehyde and glutathione to S-hydroxymethylglutathione. The sequence is that of Putative glutathione-dependent formaldehyde-activating enzyme from Aspergillus flavus (strain ATCC 200026 / FGSC A1120 / IAM 13836 / NRRL 3357 / JCM 12722 / SRRC 167).